A 301-amino-acid polypeptide reads, in one-letter code: Large ribosomal subunit protein uL18 (301 aa).

It belongs to the universal ribosomal protein uL18 family. As to quaternary structure, component of the large ribosomal subunit (LSU). Mature N.crassa ribosomes consist of a small (40S) and a large (60S) subunit. The 40S small subunit contains 1 molecule of ribosomal RNA (18S rRNA) and at least 32 different proteins. The large 60S subunit contains 3 rRNA molecules (26S, 5.8S and 5S rRNA) and at least 42 different proteins.

The protein resides in the cytoplasm. Functionally, component of the ribosome, a large ribonucleoprotein complex responsible for the synthesis of proteins in the cell. The small ribosomal subunit (SSU) binds messenger RNAs (mRNAs) and translates the encoded message by selecting cognate aminoacyl-transfer RNA (tRNA) molecules. The large subunit (LSU) contains the ribosomal catalytic site termed the peptidyl transferase center (PTC), which catalyzes the formation of peptide bonds, thereby polymerizing the amino acids delivered by tRNAs into a polypeptide chain. The nascent polypeptides leave the ribosome through a tunnel in the LSU and interact with protein factors that function in enzymatic processing, targeting, and the membrane insertion of nascent chains at the exit of the ribosomal tunnel. This is Large ribosomal subunit protein uL18 (rpl-5) from Neurospora crassa (strain ATCC 24698 / 74-OR23-1A / CBS 708.71 / DSM 1257 / FGSC 987).